The sequence spans 1529 residues: Mediator of RNA polymerase II transcription subunit 1.1 (1529 aa).

Disordered regions lie at residues 685–740 (PDAA…VVGE), 807–919 (QYRM…MRDN), and 933–1529 (PDIE…IDDE). Residues 693–702 (GKQRKPRAKK) show a composition bias toward basic residues. Composition is skewed to low complexity over residues 722–739 (GAAA…GVVG) and 807–828 (QYRM…PQQQ). Positions 894-905 (TPSPLSAPPKPF) are enriched in pro residues. The span at 908–919 (EQHHFGTKMRDN) shows a compositional bias: basic and acidic residues. Low complexity-rich tracts occupy residues 958 to 990 (SSSS…TAQT) and 1008 to 1023 (QEQA…IQQQ). Residues 1008-1032 (QEQALQKQEQQRIQQQDSVDSTNSE) are a coiled coil. Polar residues-rich tracts occupy residues 1051–1061 (NQVNRVMNMSN), 1068–1089 (GSST…STGS), and 1096–1105 (TPGTSSNIAQ). Composition is skewed to basic and acidic residues over residues 1113–1130 (LKKE…EKLI), 1137–1185 (LKVD…ERDK), 1192–1240 (RDRT…KELS), and 1262–1278 (PKKD…KDES). Positions 1169–1202 (EKEDKSQREKDKKERDKERKRRDRDRTEAKKEKD) form a coiled coil. The segment covering 1279–1288 (IPGPSTSSES) has biased composition (low complexity). Residues 1289-1304 (STRKEVAPAPISRKES) show a composition bias toward basic and acidic residues. The segment covering 1349 to 1365 (SYSGSSNAGPISSSSRG) has biased composition (low complexity). Composition is skewed to pro residues over residues 1375–1386 (PVLPPPALPMRG) and 1477–1500 (QPPP…APPS).

Belongs to the Mediator complex subunit 1 family. Component of the Mediator complex.

The protein localises to the nucleus. Its function is as follows. Component of the Mediator complex, a coactivator involved in the regulated transcription of nearly all RNA polymerase II-dependent genes. Mediator functions as a bridge to convey information from gene-specific regulatory proteins to the basal RNA polymerase II transcription machinery. Mediator is recruited to promoters by direct interactions with regulatory proteins and serves as a scaffold for the assembly of a functional preinitiation complex with RNA polymerase II and the general transcription factors. This is Mediator of RNA polymerase II transcription subunit 1.1 (sop-3) from Caenorhabditis briggsae.